We begin with the raw amino-acid sequence, 99 residues long: Large ribosomal subunit protein eL21 (99 aa).

Belongs to the eukaryotic ribosomal protein eL21 family.

The chain is Large ribosomal subunit protein eL21 from Ignicoccus hospitalis (strain KIN4/I / DSM 18386 / JCM 14125).